The primary structure comprises 89 residues: Bombyxin A-2 (89 aa).

The signal sequence occupies residues 1 to 19 (MKILLAIALMLSTVMWVST). Residue Gln20 is modified to Pyrrolidone carboxylic acid. 3 cysteine pairs are disulfide-bonded: Cys29-Cys76, Cys41-Cys89, and Cys75-Cys80. A propeptide spans 50–68 (SDAQFASYGSAWLMPYSAG) (c peptide like).

This sequence belongs to the insulin family. Heterodimer of a B chain and an A chain linked by two disulfide bonds.

The protein localises to the secreted. Functionally, brain peptide responsible for activation of prothoracic glands to produce ecdysone in insects. The sequence is that of Bombyxin A-2 (BBXA2) from Bombyx mori (Silk moth).